Reading from the N-terminus, the 172-residue chain is uncharacterized protein (172 aa).

This sequence belongs to the archaeal NMN adenylyltransferase family.

This is an uncharacterized protein from Aeropyrum pernix (strain ATCC 700893 / DSM 11879 / JCM 9820 / NBRC 100138 / K1).